The primary structure comprises 97 residues: Putative pterin-4-alpha-carbinolamine dehydratase (97 aa).

Belongs to the pterin-4-alpha-carbinolamine dehydratase family.

It catalyses the reaction (4aS,6R)-4a-hydroxy-L-erythro-5,6,7,8-tetrahydrobiopterin = (6R)-L-erythro-6,7-dihydrobiopterin + H2O. The sequence is that of Putative pterin-4-alpha-carbinolamine dehydratase from Rhizorhabdus wittichii (strain DSM 6014 / CCUG 31198 / JCM 15750 / NBRC 105917 / EY 4224 / RW1) (Sphingomonas wittichii).